A 500-amino-acid chain; its full sequence is MVILTGRSLTLDDMEAILYKGVKVGLSQSCINEIEASRRAVEKIVQDGRTVYGINTGFGKFSDVQIAAADTEELQRNLILSHACGVGGYFSDEISQAMMVLRANALAKGFSGVRLEVVEMLLELINKDIYPCIPSQGSLGASGDLAPLSHLALVLIGEGEVRYRGECMSTASCFAKLGIQPLTLQAKEGLALINGTQAMTAVGVVAYLEAEKLAYQGEQIAAVTMEGLQGIIDAFDQAVHVARGYQEQIDVAARMRHLLQGSKLTTKQGEKRVQDAYSLRCIPQVHGAVWQALGYVKDKLLIEMNAATDNPLLFDEGEKVISGGNFHGEPIAFAMDFLCIAMAELGNIAERRVERLVNPQLNDLPPFLSPAPGLQSGAMIMQYVAASLVSENKTLAHPASVDSIPSSANQEDHVSMGTIAARHALQIVENVRRICAIEAICALQAVEYRGIAAMAPATKTFFVEARRVVPTITADRVFAKDIEAMAQWLRNGGKAAAVLS.

The 5-imidazolinone (Ala-Gly) cross-link spans 141-143 (ASG). Ser-142 is modified (2,3-didehydroalanine (Ser)).

This sequence belongs to the PAL/histidase family. Contains an active site 4-methylidene-imidazol-5-one (MIO), which is formed autocatalytically by cyclization and dehydration of residues Ala-Ser-Gly.

Its subcellular location is the cytoplasm. The catalysed reaction is L-histidine = trans-urocanate + NH4(+). It functions in the pathway amino-acid degradation; L-histidine degradation into L-glutamate; N-formimidoyl-L-glutamate from L-histidine: step 1/3. The polypeptide is Histidine ammonia-lyase (Shouchella clausii (strain KSM-K16) (Alkalihalobacillus clausii)).